A 459-amino-acid chain; its full sequence is Diaminopimelate decarboxylase (459 aa).

Residue lysine 89 is modified to N6-(pyridoxal phosphate)lysine. Pyridoxal 5'-phosphate-binding positions include glycine 271 and 313–316; that span reads EPGR. Substrate-binding residues include arginine 316, arginine 357, and tyrosine 361. The active-site Proton donor is cysteine 388. Glutamate 389 and tyrosine 418 together coordinate substrate. Tyrosine 418 contributes to the pyridoxal 5'-phosphate binding site.

The protein belongs to the Orn/Lys/Arg decarboxylase class-II family. LysA subfamily. As to quaternary structure, homodimer. Pyridoxal 5'-phosphate is required as a cofactor.

It carries out the reaction meso-2,6-diaminopimelate + H(+) = L-lysine + CO2. The protein operates within amino-acid biosynthesis; L-lysine biosynthesis via DAP pathway; L-lysine from DL-2,6-diaminopimelate: step 1/1. In terms of biological role, specifically catalyzes the decarboxylation of meso-diaminopimelate (meso-DAP) to L-lysine. In Corynebacterium efficiens (strain DSM 44549 / YS-314 / AJ 12310 / JCM 11189 / NBRC 100395), this protein is Diaminopimelate decarboxylase.